A 217-amino-acid polypeptide reads, in one-letter code: Large ribosomal subunit protein uL1 (217 aa).

Belongs to the universal ribosomal protein uL1 family. Component of the large ribosomal subunit (LSU). Mature ribosomes consist of a small (40S) and a large (60S) subunit. The 40S subunit contains about 32 different proteins and 1 molecule of RNA (18S). The 60S subunit contains 45 different proteins and 3 molecules of RNA (25S, 5.8S and 5S). uL1 forms part of the L1 stalk.

Its subcellular location is the cytoplasm. In terms of biological role, component of the ribosome, a large ribonucleoprotein complex responsible for the synthesis of proteins in the cell. The small ribosomal subunit (SSU) binds messenger RNAs (mRNAs) and translates the encoded message by selecting cognate aminoacyl-transfer RNA (tRNA) molecules. The large subunit (LSU) contains the ribosomal catalytic site termed the peptidyl transferase center (PTC), which catalyzes the formation of peptide bonds, thereby polymerizing the amino acids delivered by tRNAs into a polypeptide chain. The nascent polypeptides leave the ribosome through a tunnel in the LSU and interact with protein factors that function in enzymatic processing, targeting, and the membrane insertion of nascent chains at the exit of the ribosomal tunnel. uL1 forms part of the L1 stalk, a mobile element that plays a role in evacuating the exit-site tRNA. This Candida albicans (strain SC5314 / ATCC MYA-2876) (Yeast) protein is Large ribosomal subunit protein uL1 (RPL10A).